The chain runs to 1029 residues: Putative guanine nucleotide-exchange factor SED4 (1029 aa).

The Cytoplasmic portion of the chain corresponds to 1-344 (MVFDSEYDLG…AMGGSNLWKS (344 aa)). WD repeat units lie at residues 257–296 (KDYK…VIKL) and 300–339 (VHKD…MGGS). A helical; Signal-anchor for type II membrane protein membrane pass occupies residues 345–365 (LLRFLFNVMKLAVVVIWAHLF). Topologically, residues 366–1029 (YKYDLHHKLY…TQHNVINDEL (664 aa)) are lumenal. An N-linked (GlcNAc...) asparagine glycan is attached at N579. Over residues 579–592 (NASTSISIEESTNS) the composition is skewed to low complexity. 3 disordered regions span residues 579-673 (NAST…NSIV), 710-732 (VVDE…VGSI), and 747-821 (EAVK…SQIS). Polar residues predominate over residues 593–603 (HSTFIESSSSL). N-linked (GlcNAc...) asparagine glycosylation occurs at N608. Residues 613–628 (SSREISSETSIIKEDM) show a composition bias toward basic and acidic residues. Polar residues predominate over residues 633-642 (ENVSEQSATD). N-linked (GlcNAc...) asparagine glycosylation is found at N634 and N647. The segment covering 643 to 654 (KVNKNQSIDKID) has biased composition (basic and acidic residues). A compositionally biased stretch (low complexity) spans 655–672 (VSSSSSIPTSSEGSSNSI). A compositionally biased stretch (basic and acidic residues) spans 712 to 722 (DENHSESKLPT). N-linked (GlcNAc...) asparagine glycosylation is found at N714, N754, N774, N792, N806, N855, N865, N874, N884, and N966. 2 stretches are compositionally biased toward polar residues: residues 750-762 (KTSS…SQVT) and 771-782 (RVSNQSLSTVST). Residues 783–799 (EHTEMKESSNLTEKKPE) show a composition bias toward basic and acidic residues. Low complexity predominate over residues 800–812 (SNSPESNLSESSL). Low complexity predominate over residues 858 to 867 (LVDSQSSNSS). Disordered regions lie at residues 858 to 886 (LVDS…QNET), 963 to 982 (TPEN…FMTE), and 1003 to 1029 (VAQQ…NDEL). Residues 868–886 (VKTVETNVSQDEQTSQNET) show a composition bias toward polar residues. Positions 1026–1029 (NDEL) match the Prevents secretion from ER motif.

This sequence belongs to the WD repeat SEC12 family.

The protein localises to the endoplasmic reticulum membrane. The protein resides in the golgi apparatus membrane. In terms of biological role, putative guanine nucleotide-exchange factor (GEF) involved in the formation or budding of transport vesicles from the ER. Positive regulator of SAR1 probably through inhibition of the GTPase activation by SEC23. The protein is Putative guanine nucleotide-exchange factor SED4 (SED4) of Candida glabrata (strain ATCC 2001 / BCRC 20586 / JCM 3761 / NBRC 0622 / NRRL Y-65 / CBS 138) (Yeast).